The sequence spans 350 residues: 2-oxoisovalerate dehydrogenase subunit beta (350 aa).

Heterodimer of an alpha and a beta chain. The cofactor is thiamine diphosphate.

It catalyses the reaction N(6)-[(R)-lipoyl]-L-lysyl-[protein] + 3-methyl-2-oxobutanoate + H(+) = N(6)-[(R)-S(8)-2-methylpropanoyldihydrolipoyl]-L-lysyl-[protein] + CO2. In terms of biological role, the branched-chain alpha-keto dehydrogenase complex catalyzes the overall conversion of alpha-keto acids to acyl-CoA and CO(2). It contains multiple copies of three enzymatic components: branched-chain alpha-keto acid decarboxylase (E1), lipoamide acyltransferase (E2) and lipoamide dehydrogenase (E3). The sequence is that of 2-oxoisovalerate dehydrogenase subunit beta (bkdA2) from Pseudomonas aeruginosa (strain ATCC 15692 / DSM 22644 / CIP 104116 / JCM 14847 / LMG 12228 / 1C / PRS 101 / PAO1).